The primary structure comprises 132 residues: L-ectoine synthase (132 aa).

This sequence belongs to the ectoine synthase family.

The enzyme catalyses (2S)-4-acetamido-2-aminobutanoate = L-ectoine + H2O. It participates in amine and polyamine biosynthesis; ectoine biosynthesis; L-ectoine from L-aspartate 4-semialdehyde: step 3/3. Catalyzes the circularization of gamma-N-acetyl-alpha,gamma-diaminobutyric acid (ADABA) to ectoine (1,4,5,6-tetrahydro-2-methyl-4-pyrimidine carboxylic acid), which is an excellent osmoprotectant. The sequence is that of L-ectoine synthase from Rhodococcus opacus (strain B4).